The sequence spans 150 residues: UPF0178 protein PputW619_5044 (150 aa).

The protein belongs to the UPF0178 family.

This chain is UPF0178 protein PputW619_5044, found in Pseudomonas putida (strain W619).